We begin with the raw amino-acid sequence, 298 residues long: Urease accessory protein UreD (298 aa).

Belongs to the UreD family. As to quaternary structure, ureD, UreF and UreG form a complex that acts as a GTP-hydrolysis-dependent molecular chaperone, activating the urease apoprotein by helping to assemble the nickel containing metallocenter of UreC. The UreE protein probably delivers the nickel.

Its subcellular location is the cytoplasm. Functionally, required for maturation of urease via the functional incorporation of the urease nickel metallocenter. The protein is Urease accessory protein UreD of Marinobacter nauticus (strain ATCC 700491 / DSM 11845 / VT8) (Marinobacter aquaeolei).